The sequence spans 291 residues: Glycine--tRNA ligase alpha subunit (291 aa).

The protein belongs to the class-II aminoacyl-tRNA synthetase family. As to quaternary structure, tetramer of two alpha and two beta subunits.

It is found in the cytoplasm. The enzyme catalyses tRNA(Gly) + glycine + ATP = glycyl-tRNA(Gly) + AMP + diphosphate. This chain is Glycine--tRNA ligase alpha subunit, found in Microcystis aeruginosa (strain NIES-843 / IAM M-2473).